Consider the following 479-residue polypeptide: Aspartyl/glutamyl-tRNA(Asn/Gln) amidotransferase subunit B (479 aa).

Belongs to the GatB/GatE family. GatB subfamily. As to quaternary structure, heterotrimer of A, B and C subunits.

The catalysed reaction is L-glutamyl-tRNA(Gln) + L-glutamine + ATP + H2O = L-glutaminyl-tRNA(Gln) + L-glutamate + ADP + phosphate + H(+). It catalyses the reaction L-aspartyl-tRNA(Asn) + L-glutamine + ATP + H2O = L-asparaginyl-tRNA(Asn) + L-glutamate + ADP + phosphate + 2 H(+). Allows the formation of correctly charged Asn-tRNA(Asn) or Gln-tRNA(Gln) through the transamidation of misacylated Asp-tRNA(Asn) or Glu-tRNA(Gln) in organisms which lack either or both of asparaginyl-tRNA or glutaminyl-tRNA synthetases. The reaction takes place in the presence of glutamine and ATP through an activated phospho-Asp-tRNA(Asn) or phospho-Glu-tRNA(Gln). The protein is Aspartyl/glutamyl-tRNA(Asn/Gln) amidotransferase subunit B of Geotalea daltonii (strain DSM 22248 / JCM 15807 / FRC-32) (Geobacter daltonii).